The primary structure comprises 393 residues: MEHFHQIQQTIQHYQQQLAAQQQQQVQQQQLQQHQVVVQQNQQQAHQNSSNTTAGVGTQQLFTYKMASSFPNPATTMAQVVATSNAAGTTGYDYRLNMAQAAAAAAVPGSQWWYSAANQGQVDANTAAQLQHQQQQQQQQQQQQQQQHQQQQQMQQQQQQQNVINSASPMSRVKADAKPRGRMTAYAYFVQTCREEHKKKHPDETVIFAEFSRKCAERWKTMVDKEKKRFHEMAEKDKQRYEAEMQNYVPPKGAVVGRGKKRKQIKDPNAPKRSLSAFFWFCNDERNKVKALNPEFGVGDIAKELGRKWSDVDPEVKQKYESMAERDKARYEREMTEYKTSGKIAMSAPSMQASMQAQAQKAALLAAAAQQQHQQLEEQHDDDDGDGDDDENQ.

A disordered region spans residues Gln153–Pro179. 2 DNA-binding regions (HMG box) span residues Pro179–Val249 and Pro271–Lys339. The span at Leu364–Gln374 shows a compositional bias: low complexity. Positions Leu364–Gln393 are disordered. Acidic residues predominate over residues Gln379–Gln393.

This sequence belongs to the HMGB family.

It localises to the nucleus. Its subcellular location is the chromosome. Binds preferentially single-stranded DNA and unwinds double-stranded DNA. This chain is High mobility group protein DSP1 (Dsp1), found in Drosophila melanogaster (Fruit fly).